The sequence spans 166 residues: Cilia- and flagella-associated protein 68 (166 aa).

Mn regions lie at residues 98-109 (TTYDANYSRKKP) and 139-149 (KSTYMTNYSEP).

It belongs to the CFAP68 family. Microtubule inner protein component of sperm flagellar doublet microtubules.

Its subcellular location is the cytoplasm. The protein resides in the cytoskeleton. It localises to the cilium axoneme. The protein localises to the flagellum axoneme. It is found in the nucleus. Its subcellular location is the cell projection. The protein resides in the cilium. In terms of biological role, microtubule inner protein (MIP) part of the dynein-decorated doublet microtubules (DMTs) in cilia axoneme, which is required for motile cilia beating. The sequence is that of Cilia- and flagella-associated protein 68 (Cfap68) from Mus musculus (Mouse).